Reading from the N-terminus, the 290-residue chain is MAPANLPSIFNATSTDIEQLLAAQCHIGSKNLGVHMQPYLWKTRADGVNILNVGKTWEKIVLAARIIAAIDNPADICVISARPYGQRAVLKFAAHTGAQAIAGRFTPGSFTNYITRSFKEPRLIIVTDPRTDAQAIKEASYVNIPVIALCDADSPTEYVDVAIPTNNKGRHAIGCVWWMLAREVLRLRGTIYNRETPWDVMVDLYFYRDPEAEAEEKVEEEKLPGVEEEGVAAIESGFPATGDWEAAPAGFPATGEWSDAAPGAAAPNWDATAPATTADWAATEAKESSW.

A disordered region spans residues 243–271 (DWEAAPAGFPATGEWSDAAPGAAAPNWDA). The span at 257–271 (WSDAAPGAAAPNWDA) shows a compositional bias: low complexity.

This sequence belongs to the universal ribosomal protein uS2 family. In terms of assembly, component of the small ribosomal subunit (SSU). Mature N.crassa ribosomes consist of a small (40S) and a large (60S) subunit. The 40S small subunit contains 1 molecule of ribosomal RNA (18S rRNA) and at least 32 different proteins. The large 60S subunit contains 3 rRNA molecules (26S, 5.8S and 5S rRNA) and at least 42 different proteins. Interacts with rps21.

It is found in the cytoplasm. Functionally, component of the ribosome, a large ribonucleoprotein complex responsible for the synthesis of proteins in the cell. The small ribosomal subunit (SSU) binds messenger RNAs (mRNAs) and translates the encoded message by selecting cognate aminoacyl-transfer RNA (tRNA) molecules. The large subunit (LSU) contains the ribosomal catalytic site termed the peptidyl transferase center (PTC), which catalyzes the formation of peptide bonds, thereby polymerizing the amino acids delivered by tRNAs into a polypeptide chain. The nascent polypeptides leave the ribosome through a tunnel in the LSU and interact with protein factors that function in enzymatic processing, targeting, and the membrane insertion of nascent chains at the exit of the ribosomal tunnel. uS2 is required for the assembly and/or stability of the 40S ribosomal subunit. Required for the processing of the 20S rRNA-precursor to mature 18S rRNA in a late step of the maturation of 40S ribosomal subunits. This Neurospora crassa (strain ATCC 24698 / 74-OR23-1A / CBS 708.71 / DSM 1257 / FGSC 987) protein is Small ribosomal subunit protein uS11.